We begin with the raw amino-acid sequence, 237 residues long: Periplasmic deoxyribonuclease (237 aa).

The N-terminal stretch at 1-27 (MSRPSRVLGLPLLSLGLTLLVSTPLQA) is a signal peptide.

It belongs to the EndA/NucM nuclease family.

The protein resides in the periplasm. In terms of biological role, endonuclease which is capable of degrading plasmid DNA. In Aeromonas hydrophila, this protein is Periplasmic deoxyribonuclease (dnsH).